The sequence spans 458 residues: Ribosomal protein uS12 methylthiotransferase RimO (458 aa).

In terms of domain architecture, MTTase N-terminal spans 26–136 (PRIGMVSLGC…VLDAVHGAVP (111 aa)). [4Fe-4S] cluster is bound by residues C35, C71, C100, C167, C171, and C174. Residues 153-389 (LTPRHYAYLK…MEKAQAISEA (237 aa)) enclose the Radical SAM core domain. One can recognise a TRAM domain in the interval 392 to 458 (QAKVGRTMQV…SEYDLWGKLT (67 aa)).

It belongs to the methylthiotransferase family. RimO subfamily. Requires [4Fe-4S] cluster as cofactor.

It is found in the cytoplasm. It carries out the reaction L-aspartate(89)-[ribosomal protein uS12]-hydrogen + (sulfur carrier)-SH + AH2 + 2 S-adenosyl-L-methionine = 3-methylsulfanyl-L-aspartate(89)-[ribosomal protein uS12]-hydrogen + (sulfur carrier)-H + 5'-deoxyadenosine + L-methionine + A + S-adenosyl-L-homocysteine + 2 H(+). Its function is as follows. Catalyzes the methylthiolation of an aspartic acid residue of ribosomal protein uS12. This Jannaschia sp. (strain CCS1) protein is Ribosomal protein uS12 methylthiotransferase RimO.